Reading from the N-terminus, the 166-residue chain is MLLEEVRAGDRLSGAAARGDVQEVRRLLHRELVHPDALNRFGKTALQVMMFGSTAIALELLKQGASPNVQDTSGTSPVHDAARTGFLDTLKVLVEHGADVNVPDGTGALPIHLAVQEGHTAVVSFLAAESDLHRRDARGLTPLELALQRGAQDLVDILQGHMVAPL.

Residue Met1 is modified to N-acetylmethionine. ANK repeat units follow at residues 41–69, 73–102, 106–135, and 138–166; these read FGKTALQVMMFGSTAIALELLKQGASPNV, SGTSPVHDAARTGFLDTLKVLVEHGADVNV, TGALPIHLAVQEGHTAVVSFLAAESDLHRR, and RGLTPLELALQRGAQDLVDILQGHMVAPL.

It belongs to the CDKN2 cyclin-dependent kinase inhibitor family. Interacts with CDK6.

Its subcellular location is the nucleus. It is found in the cytoplasm. In terms of biological role, interacts strongly with CDK4 and CDK6 and inhibits them. This Homo sapiens (Human) protein is Cyclin-dependent kinase 4 inhibitor D (CDKN2D).